We begin with the raw amino-acid sequence, 672 residues long: Beta-galactosidase BgaB (672 aa).

R109 lines the substrate pocket. C113 contributes to the Zn(2+) binding site. Residue N147 participates in substrate binding. E148 (proton donor) is an active-site residue. 3 residues coordinate Zn(2+): C156, C158, and C161. E303 (nucleophile) is an active-site residue. Substrate contacts are provided by residues W311 and 351 to 354 (EKFH).

The protein belongs to the glycosyl hydrolase 42 family.

It catalyses the reaction Hydrolysis of terminal non-reducing beta-D-galactose residues in beta-D-galactosides.. This chain is Beta-galactosidase BgaB, found in Geobacillus sp. (strain Y412MC61).